The chain runs to 532 residues: Bone morphogenetic protein receptor type-1A (532 aa).

Positions 1–23 are cleaved as a signal peptide; it reads MTQLYTYIRLLGACLFIISHVQG. Over 24-152 the chain is Extracellular; that stretch reads QNLDSMLHGT…IGPFFDGSVR (129 aa). 3 disulfides stabilise this stretch: Cys-61/Cys-82, Cys-63/Cys-67, and Cys-76/Cys-100. A glycan (N-linked (GlcNAc...) asparagine) is linked at Asn-73. The segment at 107–109 is mediates specificity for BMP ligand; that stretch reads DFQ. 2 disulfide bridges follow: Cys-110–Cys-124 and Cys-125–Cys-130. A helical membrane pass occupies residues 153–176; the sequence is WLAVLISMAVCIVAMIVFSSCFCY. Residues 177-532 are Cytoplasmic-facing; it reads KHYCKSISSR…KMVESQDVKI (356 aa). The GS domain occupies 204 to 233; that stretch reads ESLKDLIDQSQSSGSGSGLPLLVQRTIAKQ. Positions 234-525 constitute a Protein kinase domain; the sequence is IQMVRQVGKG…RIKKTLAKMV (292 aa). ATP is bound by residues 240-248 and Lys-261; that span reads VGKGRYGEV. Asp-362 functions as the Proton acceptor in the catalytic mechanism.

The protein belongs to the protein kinase superfamily. TKL Ser/Thr protein kinase family. TGFB receptor subfamily. In terms of assembly, interacts with low affinity with GDF5; positively regulates chondrocyte differentiation. Interacts with BMP4. Interacts with SCUBE3. Interacts with TSC22D1/TSC-22. Interacts with BMP2; the interaction may induce HAMP expression. Interacts with BMP6. Interacts with heterodimers composed of BMP2 and BMP6 in vitro; the interaction may induce HAMP expression. It depends on Mg(2+) as a cofactor. Mn(2+) serves as cofactor. In terms of processing, glycosylated.

The protein localises to the cell membrane. It is found in the cell surface. The enzyme catalyses L-threonyl-[receptor-protein] + ATP = O-phospho-L-threonyl-[receptor-protein] + ADP + H(+). It catalyses the reaction L-seryl-[receptor-protein] + ATP = O-phospho-L-seryl-[receptor-protein] + ADP + H(+). On ligand binding, forms a receptor complex consisting of two type II and two type I transmembrane serine/threonine kinases. Type II receptors phosphorylate and activate type I receptors which autophosphorylate, then bind and activate SMAD transcriptional regulators. Receptor for BMP2, BMP4, GDF5 and GDF6. Positively regulates chondrocyte differentiation through GDF5 interaction. Mediates induction of adipogenesis by GDF6. May promote the expression of HAMP, potentially via its interaction with BMP2. The polypeptide is Bone morphogenetic protein receptor type-1A (Bmpr1a) (Rattus norvegicus (Rat)).